The following is a 37-amino-acid chain: Large ribosomal subunit protein bL36 (37 aa).

The protein belongs to the bacterial ribosomal protein bL36 family.

The polypeptide is Large ribosomal subunit protein bL36 (Salinispora arenicola (strain CNS-205)).